Reading from the N-terminus, the 775-residue chain is 5-methyltetrahydropteroyltriglutamate--homocysteine methyltransferase (775 aa).

5-methyltetrahydropteroyltri-L-glutamate is bound by residues 16–19 and lysine 115; that span reads REMK. L-homocysteine-binding positions include 435–437 and glutamate 488; that span reads IGS. L-methionine-binding positions include 435-437 and glutamate 488; that span reads IGS. Residues 519–520 and tryptophan 565 contribute to the 5-methyltetrahydropteroyltri-L-glutamate site; that span reads RC. Residue aspartate 603 participates in L-homocysteine binding. Aspartate 603 contributes to the L-methionine binding site. Glutamate 609 lines the 5-methyltetrahydropteroyltri-L-glutamate pocket. 3 residues coordinate Zn(2+): histidine 645, cysteine 647, and glutamate 669. Residue histidine 698 is the Proton donor of the active site. A Zn(2+)-binding site is contributed by cysteine 730.

This sequence belongs to the vitamin-B12 independent methionine synthase family. Requires Zn(2+) as cofactor.

The catalysed reaction is 5-methyltetrahydropteroyltri-L-glutamate + L-homocysteine = tetrahydropteroyltri-L-glutamate + L-methionine. The protein operates within amino-acid biosynthesis; L-methionine biosynthesis via de novo pathway; L-methionine from L-homocysteine (MetE route): step 1/1. Functionally, catalyzes the transfer of a methyl group from 5-methyltetrahydrofolate to homocysteine resulting in methionine formation. This chain is 5-methyltetrahydropteroyltriglutamate--homocysteine methyltransferase, found in Coxiella burnetii (strain CbuK_Q154) (Coxiella burnetii (strain Q154)).